The following is a 511-amino-acid chain: D-alanine--D-alanyl carrier protein ligase (511 aa).

Residue 152 to 153 (TS) participates in ATP binding. D-alanine is bound at residue Asp199. ATP is bound at residue 294 to 299 (NAYGPT). Val303 provides a ligand contact to D-alanine. ATP-binding positions include Asp385, 397–400 (YGGR), and Lys499. Lys499 lines the D-alanine pocket.

Belongs to the ATP-dependent AMP-binding enzyme family. DltA subfamily.

The protein localises to the cytoplasm. It carries out the reaction holo-[D-alanyl-carrier protein] + D-alanine + ATP = D-alanyl-[D-alanyl-carrier protein] + AMP + diphosphate. Its pathway is cell wall biogenesis; lipoteichoic acid biosynthesis. In terms of biological role, catalyzes the first step in the D-alanylation of lipoteichoic acid (LTA), the activation of D-alanine and its transfer onto the D-alanyl carrier protein (Dcp) DltC. In an ATP-dependent two-step reaction, forms a high energy D-alanyl-AMP intermediate, followed by transfer of the D-alanyl residue as a thiol ester to the phosphopantheinyl prosthetic group of the Dcp. D-alanylation of LTA plays an important role in modulating the properties of the cell wall in Gram-positive bacteria, influencing the net charge of the cell wall. This chain is D-alanine--D-alanyl carrier protein ligase, found in Streptococcus agalactiae serotype III (strain NEM316).